The following is a 309-amino-acid chain: tRNA dimethylallyltransferase (309 aa).

9–16 lines the ATP pocket; the sequence is GPTAVGKT. Substrate is bound at residue 11 to 16; sequence TAVGKT. The segment at 34–37 is interaction with substrate tRNA; the sequence is DSMQ.

This sequence belongs to the IPP transferase family. As to quaternary structure, monomer. Mg(2+) serves as cofactor.

The enzyme catalyses adenosine(37) in tRNA + dimethylallyl diphosphate = N(6)-dimethylallyladenosine(37) in tRNA + diphosphate. Catalyzes the transfer of a dimethylallyl group onto the adenine at position 37 in tRNAs that read codons beginning with uridine, leading to the formation of N6-(dimethylallyl)adenosine (i(6)A). This is tRNA dimethylallyltransferase from Clostridium kluyveri (strain NBRC 12016).